Consider the following 1142-residue polypeptide: Desmoglein-2.1 (1142 aa).

The signal sequence occupies residues 1 to 18 (MARRISPVVAFLLCFGLS). A propeptide spanning residues 19–38 (HFFEAEARLQHSVALHRQKR) is cleaved from the precursor. Residues 39–643 (EWIVPPQILE…AKKGSRLGPA (605 aa)) are Extracellular-facing. Cadherin domains are found at residues 64-148 (SDKE…APVF), 156-258 (VDEL…VPTL), 259-416 (GGPY…GPKF), and 417-527 (FPGT…CPTL). N-linked (GlcNAc...) asparagine glycosylation occurs at Asn115. Residues 369-389 (SGAAGGAGAMGGASGSGGGTG) form a disordered region. 2 N-linked (GlcNAc...) asparagine glycosylation sites follow: Asn490 and Asn576. Residues 644–664 (GIGLLLLALLALLLIPLLLLL) form a helical membrane-spanning segment. The Cytoplasmic portion of the chain corresponds to 665–1142 (CTCGMTGAFT…RKVVTTQSVK (478 aa)). 4 Desmoglein repeat repeats span residues 948–974 (VEQQ…NSGP), 975–998 (VAEG…ERMV), 999–1039 (LVFR…VLQG), and 1040–1071 (TIQR…NGIS).

The protein resides in the cell junction. It is found in the desmosome. The protein localises to the cell membrane. Its subcellular location is the cytoplasm. In terms of biological role, a component of desmosome cell-cell junctions which are required for positive regulation of cellular adhesion. Involved in the interaction of plaque proteins and intermediate filaments mediating cell-cell adhesion. Required for embryogenesis, specifically for progression of epiboly and normal convergence-extension movements during gastrulation. The polypeptide is Desmoglein-2.1 (Danio rerio (Zebrafish)).